Here is a 428-residue protein sequence, read N- to C-terminus: MAMWLKNGMSFNENGQLVRTHIKIEHGNIAAIHHEQLFEANGEDVIDVGGKLIAPGLIDVHVHLREPGGEAKETIETGTLAAAKGGFTTVAAMPNTNPVPDRKEQMEWLARRIQETAHVRVLPYASITLGQKGEELTDFAALKEAGAFAFTDDGVGVQSAGMMFEAMKRAAALDMAIVAHCEDDTLKNGGAVHDGDFARRYGIAGIPSVCEAVHIARDVLLAEATGCHYHVCHISTKESVRVVRDAKRAGICVTAEVTPHHLLLCDEDIPRLDANYKMNPPLRSRADREALIEGLLDGTIDFIATDHAPHTAAEKAKGMEAAPFGIVGLETAFPLLYTHFVKKNVFTLKQLVDWLTIKPAQCFGLQTGRLEVGAPADITVIDLETEEPIDPETFASKGNNTPFAGWRCQGWPVMTFVGGTLVWEKGRA.

Zn(2+)-binding residues include His61 and His63. Substrate-binding positions include 63 to 65 (HLR) and Asn95. Residues Asp153, His180, and His233 each contribute to the Zn(2+) site. Asn279 lines the substrate pocket. Asp306 serves as a coordination point for Zn(2+). The active site involves Asp306. Substrate contacts are provided by residues His310 and 324 to 325 (FG).

The protein belongs to the metallo-dependent hydrolases superfamily. DHOase family. Class I DHOase subfamily. It depends on Zn(2+) as a cofactor.

It carries out the reaction (S)-dihydroorotate + H2O = N-carbamoyl-L-aspartate + H(+). The protein operates within pyrimidine metabolism; UMP biosynthesis via de novo pathway; (S)-dihydroorotate from bicarbonate: step 3/3. In terms of biological role, catalyzes the reversible cyclization of carbamoyl aspartate to dihydroorotate. In Geobacillus thermodenitrificans (strain NG80-2), this protein is Dihydroorotase.